Reading from the N-terminus, the 440-residue chain is Chaperone SurA (440 aa).

The N-terminal stretch at 1-25 (MGTKLSSRSPFSLPFLTLLAGMAIA) is a signal peptide. PpiC domains lie at 182-283 (SDEY…KLVE) and 294-392 (IDQT…QVIE).

The protein resides in the periplasm. It catalyses the reaction [protein]-peptidylproline (omega=180) = [protein]-peptidylproline (omega=0). Functionally, chaperone involved in the correct folding and assembly of outer membrane proteins. Recognizes specific patterns of aromatic residues and the orientation of their side chains, which are found more frequently in integral outer membrane proteins. May act in both early periplasmic and late outer membrane-associated steps of protein maturation. The polypeptide is Chaperone SurA (Nitrosospira multiformis (strain ATCC 25196 / NCIMB 11849 / C 71)).